The sequence spans 344 residues: Galactinol synthase 1 (344 aa).

Lys111 is a catalytic residue. Mn(2+) contacts are provided by Asp127, Asp129, and His265.

This sequence belongs to the glycosyltransferase 8 family. Galactosyltransferase subfamily. A divalent metal cation serves as cofactor. Accumulates in mature seeds. Expressed in seedlings (axes and cotyledons), meristems, vascular tissues and emerging lateral roots. Present in abscission zones.

It localises to the cytoplasm. It catalyses the reaction myo-inositol + UDP-alpha-D-galactose = alpha-D-galactosyl-(1-&gt;3)-1D-myo-inositol + UDP + H(+). Galactinol synthase involved in the biosynthesis of raffinose family oligosaccharides (RFOs) that function as osmoprotectants. Promotes plant stress tolerance such as heat, chilling, salinity and methylviologen (MV), a superoxide radical generating drug, by mediating raffinose accumulation, an osmoprotective substance. This is Galactinol synthase 1 (GOLS1) from Arabidopsis thaliana (Mouse-ear cress).